The sequence spans 134 residues: MGKDTIADIITSIRNADMNRKGTIQIGSTNITENIVKILLREGFIDNVRKHRERNKYFLVLTLRHRRNRKGPHRTILNLRRISRPGLRIYSNYQQIPRILGGMGIVILSTSRGIMTDREARLEGIGGEILCSIW.

This sequence belongs to the universal ribosomal protein uS8 family. In terms of assembly, part of the 30S ribosomal subunit.

The protein resides in the plastid. It localises to the chloroplast. One of the primary rRNA binding proteins, it binds directly to 16S rRNA central domain where it helps coordinate assembly of the platform of the 30S subunit. The polypeptide is Small ribosomal subunit protein uS8c (rps8) (Gossypium hirsutum (Upland cotton)).